The following is a 1860-amino-acid chain: MVDKNIYIIQGEINIVVGAIKRNARWSTHTPLDEERDPLLHSFGHLKEVLNSITELSEIEPNVFLRPFLEVIRSEDTTGPITGLALTSVNKFLSYALIDPTHEGTAEGMENMADAVTHARFVGTDPASDEVVLMKILQVLRTLLLTPVGAHLTNESVCEIMQSCFRICFEMRLSELLRKSAEHTLVDMVQLLFTRLPQFKEEPKNYVGTNMKKLKMRAGGMSDSSKWKKQKRSPRPPRHMTKVTPGSELPTPNGTTLSSNLTGGMPFIDVPTPISSASSEAASAVVSPSTDSGLEFSSQTTSKEDLTDLEQPGSPGYSTATEPGSSELGVPEQPDLQQEGTHVEKSQSASVESIPEVLEECTSPADHSDSASVHDMDYVNPRGVRFTQSSQKEGTALVPYGLPCIRELFRFLISLTNPHDRHNSEVMIHMGLHLLTVALESAPVAQCQTLLGLIKDEMCRHLFQLLSIERLNLYAASLRVCFLLFESMREHLKFQMEMYIKKLMEIITVENPKMPYEMKEMALEAIVQLWRIPSFVTELYINYDCDYYCSNLFEELTKLLSKNAFPVSGQLYTTHLLSLDALLTVIDSTEAHCQAKVLNSLTQQEKKETARPSCEIVDGTREASNTERTASDGKAVGMASDIPGLHLPGGGRLPPEHGKSGCSDLEEAVDSGADKKFARKPPRFSCLLPDPRELIEIKNKKKLLITGTEQFNQKPKKGIQFLQEKGLLTIPMDNTEVAQWLRENPRLDKKMIGEFVSDRKNIDLLESFVSTFSFQGLRLDEALRLYLEAFRLPGEAPVIQRLLEAFTERWMNCNGSPFANSDACFSLAYAVIMLNTDQHNHNVRKQNAPMTLEEFRKNLKGVNGGKDFEQDILEDMYHAIKNEEIVMPEEQTGLVRENYVWNVLLHRGATPEGIFLRVPTASYDLDLFTMTWGPTIAALSYVFDKSLEETIIQKAISGFRKCAMISAHYGLSDVFDNLIISLCKFTALSSESIENLPSVFGSNPKAHIAAKTVFHLAHRHGDILREGWKNIMEAMLQLFRAQLLPKAMIEVEDFVDPNGKISLQREETPSNRGESTVLSFVSWLTLSGPEQSSVRGPSTENQEAKRVALECIKQCDPEKMITESKFLQLESLQELMKALVSVTPDEETYDEEDAAFCLEMLLRIVLENRDRVGCVWQTVRDHLYHLCVQAQDFCFLVERAVVGLLRLAIRLLRREEISAQVLLSLRILLLMKPSVLSRVSHQVAYGLHELLKTNAANIHSGDDWATLFTLLECIGSGVKPPAALQATARADAPDAGAQSDSELPSYHQNDVSLDRGYTSDSEVYTDHGRPGKIHRSATDADVVNSGWLVVGKDDVDNSKPGPSRPGPSPLINQYSLTVGLDLGPHDTKSLLKCVESLSFIVRDAAHITPDNFELCVKTLRIFVEASLNGGCKSQEKRGKSHKYDSKGNRFKKKSKEGSMLRRPRTSSQHASRGGQSDDDEDEGVPASYHTVSLQVSQDLLDLMHTLHTRAASIYSSWAEEQRHLETGGQKIEADSRTLWAHCWCPLLQGIACLCCDARRQVRMQALTYLQRALLVHDLQKLDALEWESCFNKVLFPLLTKLLENISPADVGGMEETRMRASTLLSKVFLQHLSPLLSLSTFAALWLTILDFMDKYMHAGSSDLLSEAIPESLKNMLLVMDTAEIFHSADARGGGPSALWEITWERIDCFLPHLRDELFKQTVIQDPMPMEPQGQKPLASAHLTSAAGDTRTPGHPPPPEIPSELGACDFEKPESPRAASSSSPGSPVASSPSRLSPTPDGPPPLAQPPLILQPLASPLQVGVPPMTLPIILNPALIEATSPVPLLATPRPTDPIPTSEVN.

Residues 1–211 are DCB; DCB:DCB domain and DCB:HUS domain interaction; it reads MVDKNIYIIQ…EPKNYVGTNM (211 aa). The tract at residues 1–381 is interaction with RAB1B; that stretch reads MVDKNIYIIQ…SVHDMDYVNP (381 aa). 2 disordered regions span residues 215–266 and 281–372; these read KMRA…GGMP and AASA…DSAS. Basic residues predominate over residues 227 to 241; the sequence is WKKQKRSPRPPRHMT. Composition is skewed to polar residues over residues 250–262, 290–301, and 335–351; these read PTPN…SNLT, TDSGLEFSSQTT, and DLQQ…SASV. Ser-350 and Ser-353 each carry phosphoserine. At Thr-508 the chain carries Phosphothreonine. Residues 531-551 form an HUS; DCB:HUS domain interaction region; sequence RIPSFVTELYINYDCDYYCSN. Over residues 620–631 the composition is skewed to basic and acidic residues; it reads TREASNTERTAS. A disordered region spans residues 620 to 666; sequence TREASNTERTASDGKAVGMASDIPGLHLPGGGRLPPEHGKSGCSDLE. Ser-663 is modified (phosphoserine). In terms of domain architecture, SEC7 spans 693–883; sequence ELIEIKNKKK…EDMYHAIKNE (191 aa). The interval 887–1371 is phosphatidylinositol-phosphate binding; required for translocation to the leading edge and for ARF1 activation upon GPCR signaling; it reads MPEEQTGLVR…PSRPGPSPLI (485 aa). The segment covering 1285–1297 has biased composition (low complexity); it reads QATARADAPDAGA. The disordered stretch occupies residues 1285–1336; it reads QATARADAPDAGAQSDSELPSYHQNDVSLDRGYTSDSEVYTDHGRPGKIHRS. Residues 1298 to 1311 are compositionally biased toward polar residues; sequence QSDSELPSYHQNDV. Ser-1299 carries the post-translational modification Phosphoserine. Phosphotyrosine is present on Tyr-1317. A phosphoserine mark is found at Ser-1319, Ser-1321, and Ser-1336. Thr-1338 is modified (phosphothreonine; by AMPK). Disordered regions lie at residues 1351–1371, 1431–1484, and 1726–1809; these read GKDD…SPLI, CKSQ…DEGV, and PMPM…QPPL. Residues 1433–1447 are compositionally biased toward basic and acidic residues; that stretch reads SQEKRGKSHKYDSKG. Residues 1465 to 1474 show a composition bias toward polar residues; it reads TSSQHASRGG. A phosphoserine mark is found at Ser-1476, Ser-1774, and Ser-1785. A compositionally biased stretch (low complexity) spans 1775-1792; it reads PRAASSSSPGSPVASSPS.

Can form homodimers and probably homotetramers. Interacts with COPG1; the interaction is independent of ARF1 activation. Interacts with ARF1, ARF3, ARF4 and ARF5. Interacts with RAB1B (GTP-bound form); required for GBF1 membrane association. Interacts with GGA1, GGA2 and GGA3. Interacts with USO1. Interacts (via SEC7 domain) with PNPLA2 (via C-terminus); the interaction is direct. Interacts with ARMH3. In terms of assembly, (Microbial infection) Interacts with poliovirus protein 3A. Post-translationally, AMPK-mediated phosphorylation at Thr-1338 is induced by 2-deoxyglucose (2-DG) and AICA ribonucleotide, and occurs during mitosis leading to membrane disassociation and inactivation of ARF1 during mitosis. Ubiquitous.

The protein resides in the golgi apparatus. The protein localises to the cis-Golgi network. It is found in the endoplasmic reticulum-Golgi intermediate compartment. It localises to the trans-Golgi network. Its subcellular location is the cytoplasm. The protein resides in the lipid droplet. The protein localises to the membrane. Inhibited by brefeldin A (BFA). Inhibited by golgicide A (GCA). Guanine-nucleotide exchange factor (GEF) for members of the Arf family of small GTPases involved in trafficking in the early secretory pathway; its GEF activity initiates the coating of nascent vesicles via the localized generation of activated ARFs through replacement of GDP with GTP. Recruitment to cis-Golgi membranes requires membrane association of Arf-GDP and can be regulated by ARF1, ARF3, ARF4 and ARF5. Involved in the recruitment of the COPI coat complex to the endoplasmic reticulum exit sites (ERES), and the endoplasmic reticulum-Golgi intermediate (ERGIC) and cis-Golgi compartments which implicates ARF1 activation. Involved in COPI vesicle-dependent retrograde transport from the ERGIC and cis-Golgi compartments to the endoplasmic reticulum (ER). Involved in the trans-Golgi network recruitment of GGA1, GGA2, GGA3, BIG1, BIG2, and the AP-1 adaptor protein complex related to chlathrin-dependent transport; the function requires its GEF activity (probably at least in part on ARF4 and ARF5). Has GEF activity towards ARF1. Has in vitro GEF activity towards ARF5. Involved in the processing of PSAP. Required for the assembly of the Golgi apparatus. The AMPK-phosphorylated form is involved in Golgi disassembly during mitotis and under stress conditions. May be involved in the COPI vesicle-dependent recruitment of PNPLA2 to lipid droplets; however, this function is under debate. In neutrophils, involved in G protein-coupled receptor (GPCR)-mediated chemotaxis und superoxide production. Proposed to be recruited by phosphatidylinositol-phosphates generated upon GPCR stimulation to the leading edge where it recruits and activates ARF1, and is involved in recruitment of GIT2 and the NADPH oxidase complex. Plays a role in maintaining mitochondrial morphology. In Homo sapiens (Human), this protein is Golgi-specific brefeldin A-resistance guanine nucleotide exchange factor 1 (GBF1).